The primary structure comprises 427 residues: Acyl-CoA hydrolase 2 (427 aa).

A nucleoside 3',5'-cyclic phosphate is bound at residue 15 to 83 (LLQKLPSSSL…FLLKQYDYFG (69 aa)). Residues aspartate 337, serine 359, and glutamine 409 each act as charge relay system in the active site. Positions 425–427 (SKL) match the Microbody targeting signal motif.

Belongs to the C/M/P thioester hydrolase family. In terms of assembly, homotetramer. As to expression, mostly expressed in leaves and flowers, and, to a lower extent, in seedlings and siliques.

The protein localises to the peroxisome matrix. It carries out the reaction a fatty acyl-CoA + H2O = a fatty acid + CoA + H(+). It catalyses the reaction dodecanoyl-CoA + H2O = dodecanoate + CoA + H(+). The enzyme catalyses tetradecanoyl-CoA + H2O = tetradecanoate + CoA + H(+). The catalysed reaction is octadecanoyl-CoA + H2O = octadecanoate + CoA + H(+). It carries out the reaction (9Z)-hexadecenoyl-CoA + H2O = (9Z)-hexadecenoate + CoA + H(+). It catalyses the reaction (5Z,8Z,11Z,14Z)-eicosatetraenoyl-CoA + H2O = (5Z,8Z,11Z,14Z)-eicosatetraenoate + CoA + H(+). The enzyme catalyses hexadecanoyl-CoA + H2O = hexadecanoate + CoA + H(+). The catalysed reaction is (9Z)-octadecenoyl-CoA + H2O = (9Z)-octadecenoate + CoA + H(+). It carries out the reaction (9Z,12Z)-octadecadienoyl-CoA + H2O = (9Z,12Z)-octadecadienoate + CoA + H(+). It participates in lipid metabolism; fatty acid metabolism. Insensitive to feedback inhibition by free coenzyme A (CoASH). Functionally, catalyzes the hydrolysis of acyl-CoAs into free fatty acids and coenzyme A (CoASH), regulating their respective intracellular levels. Active with both medium chain and long chain acyl-CoAs (e.g. 12:0-CoA, 14:0-CoA, 16:0-CoA, 18:0-CoA, 16:1-CoA, 18:1-CoA, 18:2-CoA and 20:4-CoA) as substrates, palmitoleoyl-CoA (16:1-CoA) being the favorite substrate. The polypeptide is Acyl-CoA hydrolase 2 (Arabidopsis thaliana (Mouse-ear cress)).